A 224-amino-acid chain; its full sequence is Ribonuclease 3 (224 aa).

Positions 4–127 (YSKLEKCLDY…IMGAIYLESG (124 aa)) constitute an RNase III domain. Position 40 (Glu-40) interacts with Mg(2+). Residue Asp-44 is part of the active site. 2 residues coordinate Mg(2+): Asp-113 and Glu-116. Residue Glu-116 is part of the active site. In terms of domain architecture, DRBM spans 154-223 (DYKTALQEIT…AKIAIDKLKE (70 aa)).

It belongs to the ribonuclease III family. In terms of assembly, homodimer. The cofactor is Mg(2+).

Its subcellular location is the cytoplasm. The catalysed reaction is Endonucleolytic cleavage to 5'-phosphomonoester.. Its function is as follows. Digests double-stranded RNA. Involved in the processing of primary rRNA transcript to yield the immediate precursors to the large and small rRNAs (23S and 16S). Processes some mRNAs, and tRNAs when they are encoded in the rRNA operon. Processes pre-crRNA and tracrRNA of type II CRISPR loci if present in the organism. The chain is Ribonuclease 3 from Aliarcobacter butzleri (strain RM4018) (Arcobacter butzleri).